Reading from the N-terminus, the 131-residue chain is Colicin-N immunity protein (131 aa).

2 consecutive transmembrane segments (helical) span residues 66–84 (ILTP…FLLT) and 104–124 (VFVF…IFVL).

Its subcellular location is the cell membrane. The chain is Colicin-N immunity protein (cni) from Escherichia coli.